Here is a 699-residue protein sequence, read N- to C-terminus: 1,4-alpha-glucan-branching enzyme (699 aa).

Substrate-binding positions include 59–60 (NE) and 88–90 (WAP). A (1,4-alpha-D-glucosyl)n-binding site is contributed by W104. 115–118 (DYGK) provides a ligand contact to substrate. K140 lines the (1,4-alpha-D-glucosyl)n pocket. Y170 is modified (phosphotyrosine). Residue 330–333 (EVLR) coordinates substrate. D354 serves as the catalytic Nucleophile. E409 serves as the catalytic Proton donor.

It belongs to the glycosyl hydrolase 13 family. GlgB subfamily. Monomer.

The enzyme catalyses Transfers a segment of a (1-&gt;4)-alpha-D-glucan chain to a primary hydroxy group in a similar glucan chain.. It participates in glycan biosynthesis; glycogen biosynthesis. Glycogen-branching enzyme participates in the glycogen biosynthetic process along with glycogenin and glycogen synthase. Generates alpha-1,6-glucosidic branches from alpha-1,4-linked glucose chains, to increase solubility of the glycogen polymer. This is 1,4-alpha-glucan-branching enzyme (GBE1) from Felis catus (Cat).